Reading from the N-terminus, the 288-residue chain is Oxaloacetate decarboxylase (288 aa).

Position 47 (Ser-47) interacts with substrate. Asp-85 is a binding site for Mg(2+). Positions 156 and 232 each coordinate substrate.

The protein belongs to the isocitrate lyase/PEP mutase superfamily. Oxaloacetate decarboxylase family. Homotetramer; dimer of dimers. Mg(2+) serves as cofactor.

It carries out the reaction oxaloacetate + H(+) = pyruvate + CO2. Catalyzes the decarboxylation of oxaloacetate into pyruvate. Seems to play a role in maintaining cellular concentrations of bicarbonate and pyruvate. In Bradyrhizobium sp. (strain BTAi1 / ATCC BAA-1182), this protein is Oxaloacetate decarboxylase.